The chain runs to 1115 residues: Eukaryotic translation initiation factor 2-alpha kinase 3 (1115 aa).

Residues 1–29 (MERATGPGSLARTLLLPLLLGLVAGTVTA) form the signal peptide. The Extracellular segment spans residues 30 to 514 (RRTSDLLAPT…PNYKNIRKKD (485 aa)). Positions 74–101 (SEALPAAAGEQEAREPEPEPEEEPDIRP) are disordered. The N-linked (GlcNAc...) asparagine glycan is linked to asparagine 259. Residues 515–535 (PVLLLHWWKEIVGTIVFCIVA) form a helical membrane-spanning segment. At 536-1115 (TTFIVRRLFH…SSPHSPLPSN (580 aa)) the chain is on the cytoplasmic side. Residues 593–1076 (FEPIQCMGRG…AASIIENAIF (484 aa)) enclose the Protein kinase domain. Position 599–607 (599–607 (MGRGGFGVV)) interacts with ATP. Residue tyrosine 619 is modified to Phosphotyrosine; by autocatalysis. Lysine 622 is an ATP binding site. The insert loop stretch occupies residues 647–887 (EHPGIVRYFN…SPKVYLYIQM (241 aa)). Serine 715 is subject to Phosphoserine. Threonine 802 is subject to Phosphothreonine. Disordered regions lie at residues 807–832 (VFEDSGCDNASSKEEPRMNQPPVGNH) and 841–860 (RHSGSKSSEPTVSVSPSRPT). The span at 845-860 (SKSSEPTVSVSPSRPT) shows a compositional bias: polar residues. Aspartate 936 functions as the Proton acceptor in the catalytic mechanism. Position 981 is a phosphothreonine (threonine 981). The tract at residues 1087–1115 (LRQRSRSMSSPGAKHSRHSSSPHSPLPSN) is disordered. Serine 1093 is modified (phosphoserine).

Belongs to the protein kinase superfamily. Ser/Thr protein kinase family. GCN2 subfamily. Forms dimers with HSPA5/BIP in resting cells. Homotetramerizes in response to endoplasmic reticulum (ER) stress, leading to its activation. Interacts with HSP90B1/GRP94. Interacts with DNAJC3; inhibiting EIF2AK3/PERK activity. Interacts with ATAD3A; ATAD3A and EIF2S1/eIF-2-alpha occupy a common binding site within the cytoplasmic loop of EIF2AK3/PERK, leading to prevent EIF2AK3/PERK association with its substrate EIF2S1/eIF-2-alpha. Interacts with MFN2. Interacts with TMEM33. Interacts with PDIA6. Interacts with LACC1. In terms of processing, oligomerization of the N-terminal ER luminal domain by ER stress promotes EIF2AK3/PERK trans-autophosphorylation of the C-terminal cytoplasmic kinase domain at multiple residues including Thr-981 on the kinase activation loop. Autophosphorylated at Tyr-619 following endoplasmic reticulum stress, leading to activate its activity. Dephosphorylated at Tyr-619 by PTPN1/PTP1B, leading to inactivate its enzyme activity. Phosphorylation at Thr-802 by AKT (AKT1, AKT2 and/or AKT3) inactivates EIF2AK3/PERK. ADP-ribosylated by PARP16 upon ER stress, which increases kinase activity.

It localises to the endoplasmic reticulum membrane. The catalysed reaction is L-seryl-[protein] + ATP = O-phospho-L-seryl-[protein] + ADP + H(+). It catalyses the reaction L-threonyl-[protein] + ATP = O-phospho-L-threonyl-[protein] + ADP + H(+). It carries out the reaction L-tyrosyl-[protein] + ATP = O-phospho-L-tyrosyl-[protein] + ADP + H(+). With respect to regulation, inhibited by HSPA5/BIP in absence of stress. Perturbation in protein folding in the endoplasmic reticulum (ER) promotes reversible dissociation from HSPA5/BIP and oligomerization, resulting in trans-autophosphorylation and kinase activity induction. Inactivated following phosphorylation at Thr-802 by AKT (AKT1, AKT2 and/or AKT3). Inhibited by ATAD3A at mitochondria-endoplasmic reticulum contact sites, providing a safe haven for mitochondrial protein translation during ER stress. Functionally, metabolic-stress sensing protein kinase that phosphorylates the alpha subunit of eukaryotic translation initiation factor 2 (EIF2S1/eIF-2-alpha) in response to various stress, such as unfolded protein response (UPR). Key effector of the integrated stress response (ISR) to unfolded proteins: EIF2AK3/PERK specifically recognizes and binds misfolded proteins, leading to its activation and EIF2S1/eIF-2-alpha phosphorylation. EIF2S1/eIF-2-alpha phosphorylation in response to stress converts EIF2S1/eIF-2-alpha in a global protein synthesis inhibitor, leading to a global attenuation of cap-dependent translation, while concomitantly initiating the preferential translation of ISR-specific mRNAs, such as the transcriptional activators ATF4 and QRICH1, and hence allowing ATF4- and QRICH1-mediated reprogramming. The EIF2AK3/PERK-mediated unfolded protein response increases mitochondrial oxidative phosphorylation by promoting ATF4-mediated expression of COX7A2L/SCAF1, thereby increasing formation of respiratory chain supercomplexes. In contrast to most subcellular compartments, mitochondria are protected from the EIF2AK3/PERK-mediated unfolded protein response due to EIF2AK3/PERK inhibition by ATAD3A at mitochondria-endoplasmic reticulum contact sites. In addition to EIF2S1/eIF-2-alpha, also phosphorylates NFE2L2/NRF2 in response to stress, promoting release of NFE2L2/NRF2 from the BCR(KEAP1) complex, leading to nuclear accumulation and activation of NFE2L2/NRF2. Serves as a critical effector of unfolded protein response (UPR)-induced G1 growth arrest due to the loss of cyclin-D1 (CCND1). Involved in control of mitochondrial morphology and function. This chain is Eukaryotic translation initiation factor 2-alpha kinase 3, found in Bos taurus (Bovine).